The following is a 451-amino-acid chain: MRECISIHIGQAGIQVGNARWELYCLEHGIQPDGQMPSDKTVGGGDDAFNTFFSETGAGKHVPRAVFLDLEPTVIDEVRTGTYRQLFHPEQLISGKEDAANNFARGHYTIGKEIVDLCLDRIRKLADNCTGLQGFLVFHAVGGXTGSGLGSLLLERLSVDYGKKSKLGFTVYPSPQVSTSVVEPYNSVLSTHSLLEHTDVSVLLDNEAIYDICRRSLDIERPTYTNLNRLVSQVISSLTASLRFDGALNVDVTEFQTNLVPYPRIHFMLSSYAPVISAEKAYHEQLSVAEITNSAFEPASMMAKCDPRHGKYMACCLMYRGDVVPKDVNAAVATIKTKRTIQFVDWCPTGFKCGINYQPPTVVPGGDLAKVQRAVCMISNSTSVAEVFSRIDHKFDLMYAKRAFVHWYVGEGMEEGEFSEAREDLAALEKDYEEVGAESGEGEEGDEGEEY.

A GTP-binding site is contributed by Q11. At K40 the chain carries N6-acetyllysine. GTP contacts are provided by E71, T145, T179, N206, and N228. E71 contacts Mg(2+). The active site involves E254. The segment at 429–451 (EKDYEEVGAESGEGEEGDEGEEY) is disordered. Residues 431–451 (DYEEVGAESGEGEEGDEGEEY) show a composition bias toward acidic residues.

It belongs to the tubulin family. As to quaternary structure, dimer of alpha and beta chains. A typical microtubule is a hollow water-filled tube with an outer diameter of 25 nm and an inner diameter of 15 nM. Alpha-beta heterodimers associate head-to-tail to form protofilaments running lengthwise along the microtubule wall with the beta-tubulin subunit facing the microtubule plus end conferring a structural polarity. Microtubules usually have 13 protofilaments but different protofilament numbers can be found in some organisms and specialized cells. The cofactor is Mg(2+). Post-translationally, undergoes a tyrosination/detyrosination cycle, the cyclic removal and re-addition of a C-terminal tyrosine residue by the enzymes tubulin tyrosine carboxypeptidase (TTCP) and tubulin tyrosine ligase (TTL), respectively. In terms of processing, acetylation of alpha chains at Lys-40 stabilizes microtubules and affects affinity and processivity of microtubule motors. This modification has a role in multiple cellular functions, ranging from cell motility, cell cycle progression or cell differentiation to intracellular trafficking and signaling.

The protein resides in the cytoplasm. Its subcellular location is the cytoskeleton. The enzyme catalyses GTP + H2O = GDP + phosphate + H(+). In terms of biological role, tubulin is the major constituent of microtubules, a cylinder consisting of laterally associated linear protofilaments composed of alpha- and beta-tubulin heterodimers. Microtubules grow by the addition of GTP-tubulin dimers to the microtubule end, where a stabilizing cap forms. Below the cap, tubulin dimers are in GDP-bound state, owing to GTPase activity of alpha-tubulin. In Anemia phyllitidis (Fern), this protein is Tubulin alpha-1 chain (TUBA1).